The sequence spans 834 residues: Semaphorin-4C (834 aa).

The signal sequence occupies residues 1–20 (MAPHWAVWLLAAGLWGLGIG). At 21–664 (AEMWWNLVPR…EARAPLENLG (644 aa)) the chain is on the extracellular side. Positions 30–497 (RKTVSSGELV…SRSQLVQLSL (468 aa)) constitute a Sema domain. The dominant negative effect on myogenic differentiation stretch occupies residues 46 to 489 (SQTGIQDFLT…SKKVLFAGSR (444 aa)). Cys99 and Cys110 are disulfide-bonded. Asn106 and Asn121 each carry an N-linked (GlcNAc...) asparagine glycan. 3 disulfides stabilise this stretch: Cys128–Cys137, Cys261–Cys370, and Cys285–Cys330. N-linked (GlcNAc...) asparagine glycans are attached at residues Asn310 and Asn419. Residues 499 to 552 (DCTKYRFCVDCVLARDPYCAWNVNTSRCVATTSGRSGSFLVQHVANLDTSKMCN) enclose the PSI domain. Cystine bridges form between Cys500/Cys517 and Cys509/Cys526. N-linked (GlcNAc...) asparagine glycosylation is found at Asn522 and Asn565. The Ig-like C2-type domain occupies 557–645 (KKVRSIPKNI…RLAAESYLVA (89 aa)). A disulfide bridge links Cys578 with Cys628. Residues 665 to 685 (LVWLAVVALGAVCLVLLLLVL) form a helical membrane-spanning segment. Residues 686 to 834 (SLRRRLREEL…PDSNPEESSV (149 aa)) lie on the Cytoplasmic side of the membrane. Ser743 bears the Phosphoserine mark. The disordered stretch occupies residues 749-834 (GHARCQPGGG…PDSNPEESSV (86 aa)). Residues 757–773 (GGPPSPPPGIPGQPLPS) show a composition bias toward pro residues. The PDZ-binding signature appears at 831–834 (ESSV).

The protein belongs to the semaphorin family. As to quaternary structure, interacts (via the PDZ-binding motif) with GIPC (via the PDZ domain). Interacts with NCDN. Interacts (via the PDZ-binding motif) with DLG4. Interacts with PLXNB2. Predominantly expressed in brain (at protein level).

It localises to the postsynaptic density membrane. It is found in the cytoplasmic vesicle. The protein resides in the secretory vesicle. The protein localises to the synaptic vesicle membrane. Its function is as follows. Cell surface receptor for PLXNB2 that plays an important role in cell-cell signaling. PLXNB2 binding promotes downstream activation of RHOA and phosphorylation of ERBB2 at 'Tyr-1248'. Required for normal brain development, axon guidance and cell migration. Probable signaling receptor which may play a role in myogenic differentiation through activation of the stress-activated MAPK cascade. The protein is Semaphorin-4C (Sema4c) of Mus musculus (Mouse).